The following is a 958-amino-acid chain: Isoleucine--tRNA ligase (958 aa).

Positions 1–32 are disordered; it reads MSDNQNKPGKPAAKPQSKYPVNMTDTPFPMRG. The short motif at 71–81 is the 'HIGH' region element; the sequence is PYANGDIHLGH. Residue Glu-590 coordinates L-isoleucyl-5'-AMP. Positions 631-635 match the 'KMSKS' region motif; that stretch reads KMSKS. Lys-634 is an ATP binding site. Residues Cys-921, Cys-924, Cys-941, and Cys-944 each coordinate Zn(2+).

The protein belongs to the class-I aminoacyl-tRNA synthetase family. IleS type 1 subfamily. Monomer. Zn(2+) serves as cofactor.

Its subcellular location is the cytoplasm. The catalysed reaction is tRNA(Ile) + L-isoleucine + ATP = L-isoleucyl-tRNA(Ile) + AMP + diphosphate. Its function is as follows. Catalyzes the attachment of isoleucine to tRNA(Ile). As IleRS can inadvertently accommodate and process structurally similar amino acids such as valine, to avoid such errors it has two additional distinct tRNA(Ile)-dependent editing activities. One activity is designated as 'pretransfer' editing and involves the hydrolysis of activated Val-AMP. The other activity is designated 'posttransfer' editing and involves deacylation of mischarged Val-tRNA(Ile). In Janthinobacterium sp. (strain Marseille) (Minibacterium massiliensis), this protein is Isoleucine--tRNA ligase.